The sequence spans 428 residues: Enolase (428 aa).

Residue Q163 coordinates (2R)-2-phosphoglycerate. E205 serves as the catalytic Proton donor. Residues D242, E283, and D310 each coordinate Mg(2+). (2R)-2-phosphoglycerate contacts are provided by K335, R364, S365, and K386. The Proton acceptor role is filled by K335.

This sequence belongs to the enolase family. The cofactor is Mg(2+).

It is found in the cytoplasm. Its subcellular location is the secreted. The protein localises to the cell surface. It catalyses the reaction (2R)-2-phosphoglycerate = phosphoenolpyruvate + H2O. It functions in the pathway carbohydrate degradation; glycolysis; pyruvate from D-glyceraldehyde 3-phosphate: step 4/5. In terms of biological role, catalyzes the reversible conversion of 2-phosphoglycerate (2-PG) into phosphoenolpyruvate (PEP). It is essential for the degradation of carbohydrates via glycolysis. The chain is Enolase from Saccharopolyspora erythraea (strain ATCC 11635 / DSM 40517 / JCM 4748 / NBRC 13426 / NCIMB 8594 / NRRL 2338).